We begin with the raw amino-acid sequence, 206 residues long: METVGRPRGRPRGSKNKPKAPIFVTIDPPMSPYILEVPSGNDVVEALNRFCRGKAIGFCVLSGSGSVADVTLRQPSPAAPGSTITFHGKFDLLSVSATFLPPLPPTSLSPPVSNFFTVSLAGPQGKVIGGFVAGPLVAAGTVYFVATSFKNPSYHRLPATEEEQRNSAEGEEEGQSPPVSGGGGESMYVGGSDVIWDPNAKAPSPY.

Disordered regions lie at residues 1 to 21 and 160 to 206; these read METV…PKAP and TEEE…PSPY. Residues 5–17 constitute a DNA-binding region (a.T hook); it reads GRPRGRPRGSKNK. Basic residues predominate over residues 7–18; sequence PRGRPRGSKNKP. The PPC domain maps to 27–173; the sequence is DPPMSPYILE…QRNSAEGEEE (147 aa).

The protein localises to the nucleus. Functionally, transcription factor that specifically binds AT-rich DNA sequences related to the nuclear matrix attachment regions (MARs). The polypeptide is AT-hook motif nuclear-localized protein 28 (Arabidopsis thaliana (Mouse-ear cress)).